The following is a 410-amino-acid chain: Probable nicotinate phosphoribosyltransferase (410 aa).

Nicotinate-binding residues include tyrosine 15, phenylalanine 170, and threonine 220. Histidine 223 is subject to Phosphohistidine. Threonine 348 is a 5-phospho-alpha-D-ribose 1-diphosphate binding site.

Belongs to the NAPRTase family. Mg(2+) is required as a cofactor. It depends on Mn(2+) as a cofactor. In terms of processing, transiently phosphorylated on a His residue during the reaction cycle. Phosphorylation strongly increases the affinity for substrates and increases the rate of nicotinate D-ribonucleotide production. Dephosphorylation regenerates the low-affinity form of the enzyme, leading to product release.

The catalysed reaction is nicotinate + 5-phospho-alpha-D-ribose 1-diphosphate + ATP + H2O = nicotinate beta-D-ribonucleotide + ADP + phosphate + diphosphate. It functions in the pathway cofactor biosynthesis; NAD(+) biosynthesis; nicotinate D-ribonucleotide from nicotinate: step 1/1. Catalyzes the first step in the biosynthesis of NAD from nicotinic acid, the ATP-dependent synthesis of beta-nicotinate D-ribonucleotide from nicotinate and 5-phospho-D-ribose 1-phosphate. Helps prevent cellular oxidative stress via its role in NAD biosynthesis. The chain is Probable nicotinate phosphoribosyltransferase from Schizosaccharomyces pombe (strain 972 / ATCC 24843) (Fission yeast).